We begin with the raw amino-acid sequence, 762 residues long: Phosphoribosylformylglycinamidine synthase subunit PurL (762 aa).

The active site involves His-58. ATP-binding residues include Tyr-61 and Arg-105. Glu-107 contacts Mg(2+). Substrate-binding positions include 108–111 (SHNH) and Arg-130. Residue His-109 is the Proton acceptor of the active site. Mg(2+) is bound at residue Asp-131. Gln-255 is a binding site for substrate. Asp-283 is a binding site for Mg(2+). Substrate is bound at residue 327-329 (ESQ). The ATP site is built by Asn-513 and Gly-550. Asn-551 serves as a coordination point for Mg(2+). Ser-553 contributes to the substrate binding site.

Belongs to the FGAMS family. Monomer. Part of the FGAM synthase complex composed of 1 PurL, 1 PurQ and 2 PurS subunits.

Its subcellular location is the cytoplasm. It carries out the reaction N(2)-formyl-N(1)-(5-phospho-beta-D-ribosyl)glycinamide + L-glutamine + ATP + H2O = 2-formamido-N(1)-(5-O-phospho-beta-D-ribosyl)acetamidine + L-glutamate + ADP + phosphate + H(+). The protein operates within purine metabolism; IMP biosynthesis via de novo pathway; 5-amino-1-(5-phospho-D-ribosyl)imidazole from N(2)-formyl-N(1)-(5-phospho-D-ribosyl)glycinamide: step 1/2. Functionally, part of the phosphoribosylformylglycinamidine synthase complex involved in the purines biosynthetic pathway. Catalyzes the ATP-dependent conversion of formylglycinamide ribonucleotide (FGAR) and glutamine to yield formylglycinamidine ribonucleotide (FGAM) and glutamate. The FGAM synthase complex is composed of three subunits. PurQ produces an ammonia molecule by converting glutamine to glutamate. PurL transfers the ammonia molecule to FGAR to form FGAM in an ATP-dependent manner. PurS interacts with PurQ and PurL and is thought to assist in the transfer of the ammonia molecule from PurQ to PurL. This is Phosphoribosylformylglycinamidine synthase subunit PurL from Corynebacterium glutamicum (strain ATCC 13032 / DSM 20300 / JCM 1318 / BCRC 11384 / CCUG 27702 / LMG 3730 / NBRC 12168 / NCIMB 10025 / NRRL B-2784 / 534).